The sequence spans 539 residues: Effector protein hopAB1 (539 aa).

Disordered stretches follow at residues 1 to 93 (MPGI…PEAQ), 163 to 220 (QTVR…RHPQ), 230 to 249 (ASAA…LRRL), and 315 to 336 (RQTT…SGRR). The span at 18-31 (TDGEPVTEREHDSS) shows a compositional bias: basic and acidic residues. Residues 181-194 (SSSGSSQRSLIGRS) are compositionally biased toward low complexity.

This sequence belongs to the HopAB family.

The protein resides in the secreted. Effector protein that plays different roles depending on the species and plant cultivars that interact with the pathogen. Acts as a virulence determinant by enhancing the development of disease symptoms and bacterial growth. Acts as an avirulence factor by eliciting hypersensitive response (HR) and plant resistance. This Pseudomonas savastanoi pv. phaseolicola (strain 1448A / Race 6) (Pseudomonas syringae pv. phaseolicola (strain 1448A / Race 6)) protein is Effector protein hopAB1 (hopAB1).